Consider the following 471-residue polypeptide: MKVTQEKLPASQIGLEIEITPEITQKTYEQVIKNLSRTVNIPGFRKGKVPRQVLLQRLGKTHIKAAALEELLQDGIEQAIKQESIAAIGQPRLRSSFDDLINSYEPGQPLTFTAAVDVEPEINLVQYTGLEAKAEEIKYDPARVDEVLEKERQELATLIPVEGRSAQIGDVAVVDFKGVIAKAEGDDENAEPEPIPGGDASDFQVELQEDRFIPGFVTGIVGMNPGDTKEVSAQFPDPYVNQELAGKPAIFTVTLKEIKEKELPELNDDFAQEVSDFDTLEALRASLAERYQKEAEDKTKNNQQEALLGELVKHIEVDLPETLIEKEVDAMLTQTAMRLSQQGLDVKKLFTQDIIPQLRERSRPEAVERLKRSLGLQEVAKRESITVTPEEIQARVTELVQQYPDEDIDAERLQTIVENELLSEKIIDWLLANSTVELVPEGSLASQEPEITAPETEAETIEVAAESTTGE.

Residues 169 to 264 (GDVAVVDFKG…LKEIKEKELP (96 aa)) enclose the PPIase FKBP-type domain.

The protein belongs to the FKBP-type PPIase family. Tig subfamily.

Its subcellular location is the cytoplasm. It catalyses the reaction [protein]-peptidylproline (omega=180) = [protein]-peptidylproline (omega=0). Functionally, involved in protein export. Acts as a chaperone by maintaining the newly synthesized protein in an open conformation. Functions as a peptidyl-prolyl cis-trans isomerase. The protein is Trigger factor of Nostoc sp. (strain PCC 7120 / SAG 25.82 / UTEX 2576).